The chain runs to 241 residues: Phosphoribosylaminoimidazole-succinocarboxamide synthase (241 aa).

The protein belongs to the SAICAR synthetase family.

The catalysed reaction is 5-amino-1-(5-phospho-D-ribosyl)imidazole-4-carboxylate + L-aspartate + ATP = (2S)-2-[5-amino-1-(5-phospho-beta-D-ribosyl)imidazole-4-carboxamido]succinate + ADP + phosphate + 2 H(+). It participates in purine metabolism; IMP biosynthesis via de novo pathway; 5-amino-1-(5-phospho-D-ribosyl)imidazole-4-carboxamide from 5-amino-1-(5-phospho-D-ribosyl)imidazole-4-carboxylate: step 1/2. The polypeptide is Phosphoribosylaminoimidazole-succinocarboxamide synthase (Methanoculleus marisnigri (strain ATCC 35101 / DSM 1498 / JR1)).